The following is a 399-amino-acid chain: 4-hydroxy-3-methylbut-2-enyl diphosphate reductase (399 aa).

Residue Cys-66 participates in [4Fe-4S] cluster binding. His-96 provides a ligand contact to (2E)-4-hydroxy-3-methylbut-2-enyl diphosphate. A dimethylallyl diphosphate-binding site is contributed by His-96. Isopentenyl diphosphate is bound at residue His-96. [4Fe-4S] cluster is bound at residue Cys-157. His-185 provides a ligand contact to (2E)-4-hydroxy-3-methylbut-2-enyl diphosphate. His-185 contributes to the dimethylallyl diphosphate binding site. His-185 lines the isopentenyl diphosphate pocket. Glu-187 functions as the Proton donor in the catalytic mechanism. A (2E)-4-hydroxy-3-methylbut-2-enyl diphosphate-binding site is contributed by Thr-250. [4Fe-4S] cluster is bound at residue Cys-288. Residues Ser-317, Ser-318, Asn-319, and Ser-380 each coordinate (2E)-4-hydroxy-3-methylbut-2-enyl diphosphate. Dimethylallyl diphosphate is bound by residues Ser-317, Ser-318, Asn-319, and Ser-380. 4 residues coordinate isopentenyl diphosphate: Ser-317, Ser-318, Asn-319, and Ser-380.

This sequence belongs to the IspH family. It depends on [4Fe-4S] cluster as a cofactor.

The enzyme catalyses isopentenyl diphosphate + 2 oxidized [2Fe-2S]-[ferredoxin] + H2O = (2E)-4-hydroxy-3-methylbut-2-enyl diphosphate + 2 reduced [2Fe-2S]-[ferredoxin] + 2 H(+). It catalyses the reaction dimethylallyl diphosphate + 2 oxidized [2Fe-2S]-[ferredoxin] + H2O = (2E)-4-hydroxy-3-methylbut-2-enyl diphosphate + 2 reduced [2Fe-2S]-[ferredoxin] + 2 H(+). The protein operates within isoprenoid biosynthesis; dimethylallyl diphosphate biosynthesis; dimethylallyl diphosphate from (2E)-4-hydroxy-3-methylbutenyl diphosphate: step 1/1. It participates in isoprenoid biosynthesis; isopentenyl diphosphate biosynthesis via DXP pathway; isopentenyl diphosphate from 1-deoxy-D-xylulose 5-phosphate: step 6/6. In terms of biological role, catalyzes the conversion of 1-hydroxy-2-methyl-2-(E)-butenyl 4-diphosphate (HMBPP) into a mixture of isopentenyl diphosphate (IPP) and dimethylallyl diphosphate (DMAPP). Acts in the terminal step of the DOXP/MEP pathway for isoprenoid precursor biosynthesis. This is 4-hydroxy-3-methylbut-2-enyl diphosphate reductase from Parasynechococcus marenigrum (strain WH8102).